A 119-amino-acid polypeptide reads, in one-letter code: Large ribosomal subunit protein uL22 (119 aa).

Belongs to the universal ribosomal protein uL22 family. Part of the 50S ribosomal subunit.

This protein binds specifically to 23S rRNA; its binding is stimulated by other ribosomal proteins, e.g. L4, L17, and L20. It is important during the early stages of 50S assembly. It makes multiple contacts with different domains of the 23S rRNA in the assembled 50S subunit and ribosome. Functionally, the globular domain of the protein is located near the polypeptide exit tunnel on the outside of the subunit, while an extended beta-hairpin is found that lines the wall of the exit tunnel in the center of the 70S ribosome. The protein is Large ribosomal subunit protein uL22 of Chlorobium phaeovibrioides (strain DSM 265 / 1930) (Prosthecochloris vibrioformis (strain DSM 265)).